The chain runs to 340 residues: GTPase Obg (340 aa).

An Obg domain is found at 1–158; the sequence is MSFIDEAKVY…KWIILKLKII (158 aa). The region spanning 159–325 is the OBG-type G domain; the sequence is SDVGIIGLPN…LSILIKHINK (167 aa). Residues 165 to 172, 190 to 194, 211 to 214, 278 to 281, and 306 to 308 contribute to the GTP site; these read GLPNAGKS, FTTLE, DIPG, NKCD, and SSI. Positions 172 and 192 each coordinate Mg(2+).

Belongs to the TRAFAC class OBG-HflX-like GTPase superfamily. OBG GTPase family. As to quaternary structure, monomer. Requires Mg(2+) as cofactor.

It localises to the cytoplasm. Functionally, an essential GTPase which binds GTP, GDP and possibly (p)ppGpp with moderate affinity, with high nucleotide exchange rates and a fairly low GTP hydrolysis rate. Plays a role in control of the cell cycle, stress response, ribosome biogenesis and in those bacteria that undergo differentiation, in morphogenesis control. This is GTPase Obg from Ehrlichia ruminantium (strain Gardel).